Consider the following 215-residue polypeptide: Sodium channel regulatory subunit beta-2 (215 aa).

A signal peptide spans 1–29 (MHRDAWLPRPAFSLTGLSLFFSLVPPGRS). The Extracellular segment spans residues 30–157 (MEVTVPATLN…XEEPPERDST (128 aa)). The 123-residue stretch at 32-154 (VTVPATLNVL…QVLXEEPPER (123 aa)) folds into the Ig-like C2-type domain. N-linked (GlcNAc...) asparagine glycosylation is found at Asn-42, Asn-66, and Asn-74. Cystine bridges form between Cys-50-Cys-127 and Cys-72-Cys-75. Residues 158–179 (VAVIVGASVGGFLAVVILVLMV) traverse the membrane as a helical segment. Over 180 to 215 (VKCVRRKKEQKLSTDDLKTEEEGKTDGEGNPDDGAK) the chain is Cytoplasmic. The tract at residues 187-215 (KEQKLSTDDLKTEEEGKTDGEGNPDDGAK) is disordered. Residues 189–215 (QKLSTDDLKTEEEGKTDGEGNPDDGAK) are compositionally biased toward basic and acidic residues. A Phosphoserine modification is found at Ser-192. At Thr-204 the chain carries Phosphothreonine.

Belongs to the sodium channel auxiliary subunit SCN2B (TC 8.A.17) family. As to quaternary structure, a voltage-gated sodium (Nav) channel consists of an ion-conducting pore-forming alpha subunit functional on its own that is regulated by one or more beta subunits. The beta subunit SCN2B is disulfide-linked to the pore-forming alpha subunit. Interacts with SCN1A; regulatory subunit of SCN1A/Nav1.1. Interacts with SCN2A; regulatory subunit of SCN2A/Nav1.2. Interacts with SCN3A; regulatory subunit of SCN3A/Nav1.3. Interacts with SCN5A; regulatory subunit of SCN5A/Nav1.5. Interacts with SCN8A; regulatory subunit of SCN8A/Nav1.6. Interacts with SCN9A; regulatory subunit of SCN9A/Nav1.7. Interacts with SCN10A; regulatory subunit of SCN10A/Nav1.8. Interacts with TNR; may play a crucial role in clustering and regulation of activity of SCN2B-containing Nav channels at nodes of Ranvier.

The protein resides in the cell membrane. The protein localises to the cell projection. It is found in the axon. Regulatory subunit of multiple voltage-gated sodium (Nav) channels, that directly mediate the depolarization of excitable membranes. Navs, also called VGSCs (voltage-gated sodium channels) or VDSCs (voltage-dependent sodium channels), operate by switching between closed and open conformations depending on the voltage difference across the membrane. In the open conformation they allow Na(+) ions to selectively pass through the pore, along their electrochemical gradient. The influx of Na+ ions provokes membrane depolarization, initiating the propagation of electrical signals throughout cells and tissues. The accessory beta subunits participate in localization and functional modulation of the Nav channels. Modulates the activity of SCN1A/Nav1.1, SCN2A/Nav1.2, SCN2A/Nav1.3, SCN5A/Nav1.5, SCN8A/Nav1.6, SCN9A/Nav1.7 and SCN10A/Nav1.8. The chain is Sodium channel regulatory subunit beta-2 from Canis lupus familiaris (Dog).